Consider the following 1053-residue polypeptide: Sal-like protein 4 (1053 aa).

Positions 1–62 are disordered; it reads MSRRKQAKPQ…DEVASEDEAT (62 aa). Residues 20–46 are compositionally biased toward low complexity; the sequence is EQQPQQQTPEFADAAPAAPAAGELGAP. S57 is subject to Phosphoserine. Residues 72-94 form a C2H2-type 1; atypical zinc finger; it reads HVCEKCCAEFFSISEFLEHKKNC. Positions 116–149 are disordered; it reads SGAVLSHQPTSPGSKDCHRENGGSSEDMKEKPDA. The span at 130–149 shows a compositional bias: basic and acidic residues; that stretch reads KDCHRENGGSSEDMKEKPDA. K156 is covalently cross-linked (Glycyl lysine isopeptide (Lys-Gly) (interchain with G-Cter in SUMO1); alternate). K156 participates in a covalent cross-link: Glycyl lysine isopeptide (Lys-Gly) (interchain with G-Cter in SUMO2); alternate. Residues K175, K190, and K290 each participate in a glycyl lysine isopeptide (Lys-Gly) (interchain with G-Cter in SUMO2) cross-link. Residue S307 is modified to Phosphoserine. K316 is covalently cross-linked (Glycyl lysine isopeptide (Lys-Gly) (interchain with G-Cter in SUMO1); alternate). K316 participates in a covalent cross-link: Glycyl lysine isopeptide (Lys-Gly) (interchain with G-Cter in SUMO2); alternate. A Glycyl lysine isopeptide (Lys-Gly) (interchain with G-Cter in SUMO2) cross-link involves residue K372. Residue K374 forms a Glycyl lysine isopeptide (Lys-Gly) (interchain with G-Cter in SUMO1); alternate linkage. K374 participates in a covalent cross-link: Glycyl lysine isopeptide (Lys-Gly) (interchain with G-Cter in SUMO2); alternate. 2 consecutive C2H2-type zinc fingers follow at residues 382–404 and 410–432; these read HKCK…LRSH and FVCS…FHRH. K436 participates in a covalent cross-link: Glycyl lysine isopeptide (Lys-Gly) (interchain with G-Cter in SUMO2). The span at 483–496 shows a compositional bias: polar residues; the sequence is VGLPQNLSSGTNPK. Residues 483–546 form a disordered region; that stretch reads VGLPQNLSSG…QGSGTPEPGS (64 aa). T541 is subject to Phosphothreonine. A Glycyl lysine isopeptide (Lys-Gly) (interchain with G-Cter in SUMO2) cross-link involves residue K550. 2 consecutive C2H2-type zinc fingers follow at residues 566-588 and 594-616; these read NECL…YRTH and FQCK…LGVH. Residues K597 and K623 each participate in a glycyl lysine isopeptide (Lys-Gly) (interchain with G-Cter in SUMO2) cross-link. A C2H2-type 6 zinc finger spans residues 626–648; the sequence is HSCPICQKKFTNAVMLQQHIRMH. 3 disordered regions span residues 694–714, 736–776, and 788–828; these read EEVS…PLPS, VGPA…QSRS, and LSPA…LPST. Positions 698-708 are enriched in low complexity; the sequence is SQEAPSSSSKV. Composition is skewed to polar residues over residues 743–776 and 788–797; these read LQRQ…QSRS and LSPANSQAES. 2 positions are modified to phosphoserine: S776 and S789. Basic and acidic residues predominate over residues 810-821; that stretch reads ESSENSRTEMEG. A Glycyl lysine isopeptide (Lys-Gly) (interchain with G-Cter in SUMO1); alternate cross-link involves residue K838. Residue K838 forms a Glycyl lysine isopeptide (Lys-Gly) (interchain with G-Cter in SUMO2); alternate linkage. S852 is modified (phosphoserine). The C2H2-type 7 zinc-finger motif lies at 870–892; sequence HGCTRCGKNFSSASALQIHERTH. A Glycyl lysine isopeptide (Lys-Gly) (interchain with G-Cter in SUMO2) cross-link involves residue K896. The C2H2-type 8 zinc finger occupies 898–920; it reads FVCNICGRAFTTKGNLKVHYMTH. Glycyl lysine isopeptide (Lys-Gly) (interchain with G-Cter in SUMO2) cross-links involve residues K932 and K947. Residues 1018 to 1039 form a disordered region; sequence GSQSGISADVEKPSATDGVPKH. The residue at position 1019 (S1019) is a Phosphoserine.

Belongs to the sal C2H2-type zinc-finger protein family. Interacts with POU5F1/OCT4. Interacts with NANOG. Interacts with BEND3. Interacts with NSD2 (via PHD-type zinc fingers 1, 2 and 3). Interacts with NRBP1. Isoform SALL4B exists primarily as a ubiquitinated form. In terms of processing, sumoylation with both SUMO1 and SUMO2 regulates the stability, subcellular localization, transcriptional activity, and may reduce interaction with POU5F1/OCT4. As to expression, expressed in testis. Constitutively expressed in acute myeloid leukemia (AML).

It is found in the cytoplasm. Its subcellular location is the nucleus. Functionally, transcription factor with a key role in the maintenance and self-renewal of embryonic and hematopoietic stem cells. In Homo sapiens (Human), this protein is Sal-like protein 4 (SALL4).